The primary structure comprises 537 residues: MGCVQCKDKEATKLTDERDNSLTQSLGYRYGTDPTPQHYPSFTVTTIPNYNNFHATAGQGLTVFGGVNSSSHTGTLRTRGGTGVTLFVALYDYEARTEDDLSFQKGEKFQILNSSEGDWWEARSLTTGGTGYIPSNYVAPVDSIQAEEWYFGKLGRKDAERQLLSFGNPRGTYLIRESETTKGAYSLSIRDWDDMKGDHVKHYKIRKLDNGGYYITTRAQFETLQQLVQHYSERAAGLCCRLVVPCHKGMPRLTDLSVKTKDVWEIPRESLQLIKRLGNGQFGEVWMGTWNGNTKVAIKTLKPGTMSPESFLEEAQIMKKLKHDKLVQLYAVVSEEPIYIVTEYMSKGSLLDFLKDGEGRALKLPNLVDMAAQVARGMAYIERMNYIHRDLRSANILVGNGLICKIADFGLARLIEDNEYTARQGAKFPIKWTAPEAALYGRFTIKSDVWSFGILLTELVTKGRVPYPGMNNREVLEQVERGYRMPCPQDCPISLHELMLNCWKKDPEERPTFEYLQGFLEDYFTATEPQYQPGDNL.

Residue G2 is the site of N-myristoyl glycine attachment. 2 S-palmitoyl cysteine lipidation sites follow: C3 and C6. T12 carries the phosphothreonine; by PKC modification. The 62-residue stretch at 82–143 (TGVTLFVALY…PSNYVAPVDS (62 aa)) folds into the SH3 domain. In terms of domain architecture, SH2 spans 149 to 246 (WYFGKLGRKD…GLCCRLVVPC (98 aa)). The region spanning 271-524 (LQLIKRLGNG…YLQGFLEDYF (254 aa)) is the Protein kinase domain. Residues 277–285 (LGNGQFGEV) and K299 contribute to the ATP site. Catalysis depends on D390, which acts as the Proton acceptor. At Y420 the chain carries Phosphotyrosine; by autocatalysis. At Y531 the chain carries Phosphotyrosine.

The protein belongs to the protein kinase superfamily. Tyr protein kinase family. SRC subfamily. In terms of assembly, associates through its SH3 domain, to the p85 subunit of phosphatidylinositol 3-kinase. Requires Mn(2+) as cofactor.

It catalyses the reaction L-tyrosyl-[protein] + ATP = O-phospho-L-tyrosyl-[protein] + ADP + H(+). With respect to regulation, inhibited by phosphorylation of Tyr-531 by leukocyte common antigen and activated by dephosphorylation of this site. Its function is as follows. Tyrosine-protein kinase implicated in the control of cell growth. Plays a role in the regulation of intracellular calcium levels. Required in brain development and mature brain function with important roles in the regulation of axon growth, axon guidance, and neurite extension. Blocks axon outgrowth and attraction induced by ntn1 by phosphorylating its receptor ddc. The chain is Tyrosine-protein kinase Fyn (fyn) from Xenopus laevis (African clawed frog).